The following is a 218-amino-acid chain: Cytidylate kinase (218 aa).

11 to 19 (GPGASGKGT) serves as a coordination point for ATP.

This sequence belongs to the cytidylate kinase family. Type 1 subfamily.

The protein resides in the cytoplasm. The catalysed reaction is CMP + ATP = CDP + ADP. It catalyses the reaction dCMP + ATP = dCDP + ADP. The protein is Cytidylate kinase of Neisseria meningitidis serogroup A / serotype 4A (strain DSM 15465 / Z2491).